The primary structure comprises 375 residues: Cell division protein ZapE (375 aa).

G78 to T85 is an ATP binding site.

It belongs to the AFG1 ATPase family. ZapE subfamily. As to quaternary structure, interacts with FtsZ.

Its subcellular location is the cytoplasm. Functionally, reduces the stability of FtsZ polymers in the presence of ATP. This chain is Cell division protein ZapE, found in Escherichia coli O157:H7.